We begin with the raw amino-acid sequence, 788 residues long: Bifunctional purine biosynthetic protein ADE1 (788 aa).

A GARS region spans residues 1-430; it reads MEPIIALLIG…DIAHHALNPK (430 aa). Positions 115–321 constitute an ATP-grasp domain; that stretch reads KDFMHRNNIP…LAEIILACVN (207 aa). Residue 141–202 coordinates ATP; that stretch reads LDTCTFDVVI…EELLEGEELS (62 aa). Glutamate 291 and asparagine 293 together coordinate Mg(2+). The segment at 437 to 769 is AIRS; the sequence is LTYENSGVSV…TVYRIGQLVD (333 aa).

This sequence in the N-terminal section; belongs to the GARS family. The protein in the C-terminal section; belongs to the AIR synthase family. Mg(2+) serves as cofactor. It depends on Mn(2+) as a cofactor.

Its subcellular location is the cytoplasm. It is found in the cytosol. The enzyme catalyses 5-phospho-beta-D-ribosylamine + glycine + ATP = N(1)-(5-phospho-beta-D-ribosyl)glycinamide + ADP + phosphate + H(+). It carries out the reaction 2-formamido-N(1)-(5-O-phospho-beta-D-ribosyl)acetamidine + ATP = 5-amino-1-(5-phospho-beta-D-ribosyl)imidazole + ADP + phosphate + H(+). It functions in the pathway purine metabolism; IMP biosynthesis via de novo pathway; 5-amino-1-(5-phospho-D-ribosyl)imidazole from N(2)-formyl-N(1)-(5-phospho-D-ribosyl)glycinamide: step 2/2. It participates in purine metabolism; IMP biosynthesis via de novo pathway; N(1)-(5-phospho-D-ribosyl)glycinamide from 5-phospho-alpha-D-ribose 1-diphosphate: step 2/2. Its function is as follows. Catalyzes the second and fifth step in the 'de novo' purine biosynthesis pathway; contains phosphoribosylamine--glycine ligase (GARS) and phosphoribosylformylglycinamidine cyclo-ligase (AIRS) activities. This Schizosaccharomyces pombe (strain 972 / ATCC 24843) (Fission yeast) protein is Bifunctional purine biosynthetic protein ADE1.